The sequence spans 274 residues: Large ribosomal subunit protein uL2 (274 aa).

Disordered regions lie at residues 28–54 and 224–274; these read APHAPLLEKKSKSGGRNNNGRITTRHI and VAMN…RRRK. The segment covering 263-274 has biased composition (basic and acidic residues); that stretch reads KRTDKMIVRRRK.

This sequence belongs to the universal ribosomal protein uL2 family. Part of the 50S ribosomal subunit. Forms a bridge to the 30S subunit in the 70S ribosome.

One of the primary rRNA binding proteins. Required for association of the 30S and 50S subunits to form the 70S ribosome, for tRNA binding and peptide bond formation. It has been suggested to have peptidyltransferase activity; this is somewhat controversial. Makes several contacts with the 16S rRNA in the 70S ribosome. The sequence is that of Large ribosomal subunit protein uL2 from Pseudomonas savastanoi pv. phaseolicola (strain 1448A / Race 6) (Pseudomonas syringae pv. phaseolicola (strain 1448A / Race 6)).